The chain runs to 98 residues: Protein translation factor SUI1 homolog (98 aa).

Belongs to the SUI1 family.

In Thermococcus gammatolerans (strain DSM 15229 / JCM 11827 / EJ3), this protein is Protein translation factor SUI1 homolog.